Here is a 245-residue protein sequence, read N- to C-terminus: Adenosylcobinamide-GDP ribazoletransferase (245 aa).

5 consecutive transmembrane segments (helical) span residues 35–55, 108–128, 137–157, 176–196, and 197–217; these read WFPLAGLVVGGACWLPFALGL, IGAFGVMGLLLGFGGQYIGAH, GVLIAAPIVGRGACVILAALV, IAIGVAATCGMLALLLTTPAI, and TTVTTIAICGAIVTALAHLAR.

It belongs to the CobS family. The cofactor is Mg(2+).

It localises to the cell inner membrane. It catalyses the reaction alpha-ribazole + adenosylcob(III)inamide-GDP = adenosylcob(III)alamin + GMP + H(+). The enzyme catalyses alpha-ribazole 5'-phosphate + adenosylcob(III)inamide-GDP = adenosylcob(III)alamin 5'-phosphate + GMP + H(+). It functions in the pathway cofactor biosynthesis; adenosylcobalamin biosynthesis; adenosylcobalamin from cob(II)yrinate a,c-diamide: step 7/7. Functionally, joins adenosylcobinamide-GDP and alpha-ribazole to generate adenosylcobalamin (Ado-cobalamin). Also synthesizes adenosylcobalamin 5'-phosphate from adenosylcobinamide-GDP and alpha-ribazole 5'-phosphate. The polypeptide is Adenosylcobinamide-GDP ribazoletransferase (Nitratidesulfovibrio vulgaris (strain ATCC 29579 / DSM 644 / CCUG 34227 / NCIMB 8303 / VKM B-1760 / Hildenborough) (Desulfovibrio vulgaris)).